A 254-amino-acid polypeptide reads, in one-letter code: Probable electron transfer flavoprotein subunit beta (254 aa).

Belongs to the ETF beta-subunit/FixA family. As to quaternary structure, heterodimer of an alpha and a beta subunit. The cofactor is FAD. It depends on AMP as a cofactor.

The protein localises to the mitochondrion matrix. Its function is as follows. The electron transfer flavoprotein serves as a specific electron acceptor for several dehydrogenases, including five acyl-CoA dehydrogenases, glutaryl-CoA and sarcosine dehydrogenase. It transfers the electrons to the main mitochondrial respiratory chain via ETF-ubiquinone oxidoreductase (ETF dehydrogenase). The chain is Probable electron transfer flavoprotein subunit beta from Schizosaccharomyces pombe (strain 972 / ATCC 24843) (Fission yeast).